Reading from the N-terminus, the 319-residue chain is tRNA uridine(34) hydroxylase (319 aa).

The region spanning 127–221 (KQEDTVIIDA…YGKDPEVQGE (95 aa)) is the Rhodanese domain. Catalysis depends on C181, which acts as the Cysteine persulfide intermediate.

This sequence belongs to the TrhO family.

The enzyme catalyses uridine(34) in tRNA + AH2 + O2 = 5-hydroxyuridine(34) in tRNA + A + H2O. Catalyzes oxygen-dependent 5-hydroxyuridine (ho5U) modification at position 34 in tRNAs. This Bacillus cereus (strain AH187) protein is tRNA uridine(34) hydroxylase.